Reading from the N-terminus, the 288-residue chain is Pyridoxal kinase PdxY (288 aa).

Substrate is bound by residues Ser12 and Thr47–Gln48. Residues Asp114, Glu151, Lys184, and Arg211–Leu214 contribute to the ATP site. Asp225 is a binding site for substrate.

It belongs to the pyridoxine kinase family. PdxY subfamily. In terms of assembly, homodimer. It depends on Mg(2+) as a cofactor.

The catalysed reaction is pyridoxal + ATP = pyridoxal 5'-phosphate + ADP + H(+). It functions in the pathway cofactor metabolism; pyridoxal 5'-phosphate salvage; pyridoxal 5'-phosphate from pyridoxal: step 1/1. Functionally, pyridoxal kinase involved in the salvage pathway of pyridoxal 5'-phosphate (PLP). Catalyzes the phosphorylation of pyridoxal to PLP. This Pseudomonas aeruginosa (strain UCBPP-PA14) protein is Pyridoxal kinase PdxY.